Consider the following 307-residue polypeptide: Ribonuclease Z (307 aa).

Zn(2+) is bound by residues histidine 63, histidine 65, aspartate 67, histidine 68, histidine 143, aspartate 213, and histidine 271. Catalysis depends on aspartate 67, which acts as the Proton acceptor.

The protein belongs to the RNase Z family. Homodimer. Zn(2+) serves as cofactor.

The enzyme catalyses Endonucleolytic cleavage of RNA, removing extra 3' nucleotides from tRNA precursor, generating 3' termini of tRNAs. A 3'-hydroxy group is left at the tRNA terminus and a 5'-phosphoryl group is left at the trailer molecule.. In terms of biological role, zinc phosphodiesterase, which displays some tRNA 3'-processing endonuclease activity. Probably involved in tRNA maturation, by removing a 3'-trailer from precursor tRNA. The polypeptide is Ribonuclease Z (Lactococcus lactis subsp. lactis (strain IL1403) (Streptococcus lactis)).